A 352-amino-acid chain; its full sequence is tRNA uridine(34) hydroxylase (352 aa).

The 95-residue stretch at 146 to 240 (DNPDTLFVDM…YARKAREQGL (95 aa)) folds into the Rhodanese domain. Cys-200 serves as the catalytic Cysteine persulfide intermediate. Basic and acidic residues predominate over residues 315–328 (ETEQRARRAGRENG). The segment at 315–352 (ETEQRARRAGRENGAKIFNKSRHRLQDGLNSTSLQSVE) is disordered. The span at 342–352 (GLNSTSLQSVE) shows a compositional bias: polar residues.

Belongs to the TrhO family.

It catalyses the reaction uridine(34) in tRNA + AH2 + O2 = 5-hydroxyuridine(34) in tRNA + A + H2O. Functionally, catalyzes oxygen-dependent 5-hydroxyuridine (ho5U) modification at position 34 in tRNAs. This chain is tRNA uridine(34) hydroxylase, found in Photorhabdus laumondii subsp. laumondii (strain DSM 15139 / CIP 105565 / TT01) (Photorhabdus luminescens subsp. laumondii).